The sequence spans 1340 residues: TSET complex member tstE (1340 aa).

Residues 56–67 (NQSQTSPNSNDG) are compositionally biased toward low complexity. Disordered regions lie at residues 56-75 (NQSQ…GSGG) and 110-131 (SGSG…GGGQ). WD repeat units follow at residues 208–246 (VNQI…VIGK), 250–294 (DPTE…LQTI), 345–384 (GHKK…SFLN), and 397–436 (IEHS…NPQE). Residues 1216–1251 (KSHMSSTTTLRRSPSIENIRTTSTTFDSSKFNTDNQ) are compositionally biased toward polar residues. The tract at residues 1216–1340 (KSHMSSTTTL…TPTPTTTLSS (125 aa)) is disordered. Acidic residues predominate over residues 1252 to 1275 (ELFDDDSDDDSDSGADADVDSENE). The span at 1286–1318 (ASLQHNDNSSLTNITVTDNDSNLDQDITSNTGS) shows a compositional bias: polar residues. A compositionally biased stretch (low complexity) spans 1328-1340 (LSSTPTPTTTLSS).

As to quaternary structure, component of the TSET complex, a heterohexamer composed of tstA, tstB, tstC, tstD, tstE and tstF, which may act in plasma membrane turnover. tstA, tstB, tstC and tstD are likely to be the core complex members with tstE and tstF acting as associated scaffold proteins.

This chain is TSET complex member tstE, found in Dictyostelium discoideum (Social amoeba).